The following is a 408-amino-acid chain: tRNA wybutosine-synthesizing protein 2 homolog (408 aa).

S-adenosyl-L-methionine-binding positions include serine 201, lysine 208, glutamate 248, and 276 to 277 (DN).

This sequence belongs to the class I-like SAM-binding methyltransferase superfamily. TRM5/TYW2 family.

The enzyme catalyses 4-demethylwyosine(37) in tRNA(Phe) + S-adenosyl-L-methionine = 4-demethyl-7-[(3S)-3-amino-3-carboxypropyl]wyosine(37) in tRNA(Phe) + S-methyl-5'-thioadenosine + H(+). It participates in tRNA modification; wybutosine-tRNA(Phe) biosynthesis. S-adenosyl-L-methionine-dependent transferase that acts as a component of the wybutosine biosynthesis pathway. Wybutosine is a hyper modified guanosine with a tricyclic base found at the 3'-position adjacent to the anticodon of eukaryotic phenylalanine tRNA. Catalyzes the transfer of the alpha-amino-alpha-carboxypropyl (acp) group from S-adenosyl-L-methionine to the C-7 position of 4-demethylwyosine (imG-14) to produce wybutosine-86. The sequence is that of tRNA wybutosine-synthesizing protein 2 homolog (trmt12) from Danio rerio (Zebrafish).